The primary structure comprises 252 residues: Nuclease C1 (252 aa).

Catalysis depends on His87, which acts as the Proton acceptor. Asn119 is a Mg(2+) binding site.

The protein belongs to the DNA/RNA non-specific endonuclease family. Mg(2+) is required as a cofactor. The cofactor is Mn(2+).

It localises to the secreted. This enzyme has both RNase and DNase activity. This chain is Nuclease C1 (NUC1CE), found in Cunninghamella echinulata var. echinulata.